The following is a 185-amino-acid chain: Kappa-casein (185 aa).

A signal peptide spans 1–20 (MKSFFLVVNILALTLPFLGA). An O-linked (GalNAc...) threonine glycan is attached at T143. At S161 the chain carries Phosphoserine; alternate. The O-linked (GalNAc...) serine; alternate glycan is linked to S161. T178 carries O-linked (GalNAc...) threonine glycosylation. S179 bears the Phosphoserine mark.

It belongs to the kappa-casein family. Mammary gland specific. Secreted in milk.

It is found in the secreted. Kappa-casein stabilizes micelle formation, preventing casein precipitation in milk. The chain is Kappa-casein (CSN3) from Equus caballus (Horse).